A 100-amino-acid polypeptide reads, in one-letter code: NAD(P)H-quinone oxidoreductase subunit 4L, chloroplastic (100 aa).

Helical transmembrane passes span 1–21 (MLEH…FGLI), 29–49 (ALMC…TFSN), and 60–80 (IFAI…LAIV).

Belongs to the complex I subunit 4L family. NDH is composed of at least 16 different subunits, 5 of which are encoded in the nucleus.

It localises to the plastid. The protein resides in the chloroplast thylakoid membrane. It carries out the reaction a plastoquinone + NADH + (n+1) H(+)(in) = a plastoquinol + NAD(+) + n H(+)(out). It catalyses the reaction a plastoquinone + NADPH + (n+1) H(+)(in) = a plastoquinol + NADP(+) + n H(+)(out). Functionally, NDH shuttles electrons from NAD(P)H:plastoquinone, via FMN and iron-sulfur (Fe-S) centers, to quinones in the photosynthetic chain and possibly in a chloroplast respiratory chain. The immediate electron acceptor for the enzyme in this species is believed to be plastoquinone. Couples the redox reaction to proton translocation, and thus conserves the redox energy in a proton gradient. The chain is NAD(P)H-quinone oxidoreductase subunit 4L, chloroplastic from Physcomitrium patens (Spreading-leaved earth moss).